The primary structure comprises 268 residues: Small ribosomal subunit protein eS1 (268 aa).

The disordered stretch occupies residues 1–21 (MAVGKNKGLSKGGKKGGKKKV).

It belongs to the eukaryotic ribosomal protein eS1 family. Component of the small ribosomal subunit. Mature ribosomes consist of a small (40S) and a large (60S) subunit. The 40S subunit contains about 33 different proteins and 1 molecule of RNA (18S). The 60S subunit contains about 49 different proteins and 3 molecules of RNA (28S, 5.8S and 5S).

Its subcellular location is the cytoplasm. Its function is as follows. Essential for oogenesis; required for late follicle cell development. This Drosophila persimilis (Fruit fly) protein is Small ribosomal subunit protein eS1.